A 476-amino-acid polypeptide reads, in one-letter code: Replication factor C large subunit (476 aa).

43 to 50 (GKPGIGKT) is an ATP binding site. The tract at residues 435–476 (LEALRMQEPPVPETPPAAEEQPLEEPQEEKKLAPKQATLDFF) is disordered.

This sequence belongs to the activator 1 small subunits family. RfcL subfamily. Heteromultimer composed of small subunits (RfcS) and large subunits (RfcL).

Functionally, part of the RFC clamp loader complex which loads the PCNA sliding clamp onto DNA. This chain is Replication factor C large subunit, found in Methanocorpusculum labreanum (strain ATCC 43576 / DSM 4855 / Z).